The primary structure comprises 332 residues: Protein pelota homolog (332 aa).

It belongs to the eukaryotic release factor 1 family. Pelota subfamily. As to quaternary structure, monomer. The cofactor is a divalent metal cation.

It is found in the cytoplasm. May function in recognizing stalled ribosomes, interact with stem-loop structures in stalled mRNA molecules, and effect endonucleolytic cleavage of the mRNA. May play a role in the release non-functional ribosomes and degradation of damaged mRNAs. Has endoribonuclease activity. The polypeptide is Protein pelota homolog (Pyrobaculum aerophilum (strain ATCC 51768 / DSM 7523 / JCM 9630 / CIP 104966 / NBRC 100827 / IM2)).